Consider the following 128-residue polypeptide: MAKDTRTRKKVTRTVSEGVAHIHASFNNTIVTITDRQGNALAWATSGGQGFRGSRKSTPFAAQVAAEVAGKAALDYGLKNLDVLVKGPGPGRESAVRALGAVGYKINSITDVTPIPHNGCRPPKKRRV.

Belongs to the universal ribosomal protein uS11 family. As to quaternary structure, part of the 30S ribosomal subunit. Interacts with proteins S7 and S18. Binds to IF-3.

In terms of biological role, located on the platform of the 30S subunit, it bridges several disparate RNA helices of the 16S rRNA. Forms part of the Shine-Dalgarno cleft in the 70S ribosome. The sequence is that of Small ribosomal subunit protein uS11 from Acinetobacter baylyi (strain ATCC 33305 / BD413 / ADP1).